We begin with the raw amino-acid sequence, 247 residues long: Probable chemoreceptor glutamine deamidase CheD (247 aa).

The interval 204–247 (KRPAAPQPARPRIELFGGRGTTPGAGSQAAGSPYAANLSRKQEA) is disordered.

This sequence belongs to the CheD family.

It catalyses the reaction L-glutaminyl-[protein] + H2O = L-glutamyl-[protein] + NH4(+). Its function is as follows. Probably deamidates glutamine residues to glutamate on methyl-accepting chemotaxis receptors (MCPs), playing an important role in chemotaxis. This is Probable chemoreceptor glutamine deamidase CheD from Burkholderia orbicola (strain MC0-3).